Reading from the N-terminus, the 337-residue chain is Holliday junction branch migration complex subunit RuvB (337 aa).

A large ATPase domain (RuvB-L) region spans residues 1–179 (MTHQVAVLHQ…FAFSARLSYY (179 aa)). ATP contacts are provided by residues L18, R19, G60, K63, T64, S65, 126–128 (EDF), R169, Y179, and R216. Residue T64 participates in Mg(2+) binding. The tract at residues 180 to 250 (SDQDLKEILV…VAEKALAMLL (71 aa)) is small ATPAse domain (RuvB-S). The head domain (RuvB-H) stretch occupies residues 253–337 (DWGLNEIDIK…KNLLSLGEGQ (85 aa)). DNA contacts are provided by K308 and R313.

It belongs to the RuvB family. As to quaternary structure, homohexamer. Forms an RuvA(8)-RuvB(12)-Holliday junction (HJ) complex. HJ DNA is sandwiched between 2 RuvA tetramers; dsDNA enters through RuvA and exits via RuvB. An RuvB hexamer assembles on each DNA strand where it exits the tetramer. Each RuvB hexamer is contacted by two RuvA subunits (via domain III) on 2 adjacent RuvB subunits; this complex drives branch migration. In the full resolvosome a probable DNA-RuvA(4)-RuvB(12)-RuvC(2) complex forms which resolves the HJ.

It localises to the cytoplasm. The enzyme catalyses ATP + H2O = ADP + phosphate + H(+). The RuvA-RuvB-RuvC complex processes Holliday junction (HJ) DNA during genetic recombination and DNA repair, while the RuvA-RuvB complex plays an important role in the rescue of blocked DNA replication forks via replication fork reversal (RFR). RuvA specifically binds to HJ cruciform DNA, conferring on it an open structure. The RuvB hexamer acts as an ATP-dependent pump, pulling dsDNA into and through the RuvAB complex. RuvB forms 2 homohexamers on either side of HJ DNA bound by 1 or 2 RuvA tetramers; 4 subunits per hexamer contact DNA at a time. Coordinated motions by a converter formed by DNA-disengaged RuvB subunits stimulates ATP hydrolysis and nucleotide exchange. Immobilization of the converter enables RuvB to convert the ATP-contained energy into a lever motion, pulling 2 nucleotides of DNA out of the RuvA tetramer per ATP hydrolyzed, thus driving DNA branch migration. The RuvB motors rotate together with the DNA substrate, which together with the progressing nucleotide cycle form the mechanistic basis for DNA recombination by continuous HJ branch migration. Branch migration allows RuvC to scan DNA until it finds its consensus sequence, where it cleaves and resolves cruciform DNA. The polypeptide is Holliday junction branch migration complex subunit RuvB (Chlamydia pneumoniae (Chlamydophila pneumoniae)).